We begin with the raw amino-acid sequence, 588 residues long: L-fucose isomerase (588 aa).

Residues Glu-335 and Asp-359 each act as proton acceptor in the active site. Mn(2+)-binding residues include Glu-335, Asp-359, and His-525.

The protein belongs to the L-fucose isomerase family. It depends on Mn(2+) as a cofactor.

Its subcellular location is the cytoplasm. It catalyses the reaction L-fucose = L-fuculose. It participates in carbohydrate degradation; L-fucose degradation; L-lactaldehyde and glycerone phosphate from L-fucose: step 1/3. In terms of biological role, converts the aldose L-fucose into the corresponding ketose L-fuculose. The protein is L-fucose isomerase of Streptococcus pneumoniae (strain ATCC 700669 / Spain 23F-1).